Consider the following 235-residue polypeptide: Protein GrpE (235 aa).

Over residues 1–18 the composition is skewed to polar residues; the sequence is MTDGNQKPDGNSGEQVTV. Disordered stretches follow at residues 1–50 and 198–235; these read MTDG…DAAH and ESVDDGTAVADTAENDQADQGNSADTSGEQAESEPSGS. Residues 19–35 show a composition bias toward basic and acidic residues; it reads TDKRRIDPETGEVRHVP. A compositionally biased stretch (polar residues) spans 215-235; sequence ADQGNSADTSGEQAESEPSGS.

This sequence belongs to the GrpE family. In terms of assembly, homodimer.

The protein localises to the cytoplasm. In terms of biological role, participates actively in the response to hyperosmotic and heat shock by preventing the aggregation of stress-denatured proteins, in association with DnaK and GrpE. It is the nucleotide exchange factor for DnaK and may function as a thermosensor. Unfolded proteins bind initially to DnaJ; upon interaction with the DnaJ-bound protein, DnaK hydrolyzes its bound ATP, resulting in the formation of a stable complex. GrpE releases ADP from DnaK; ATP binding to DnaK triggers the release of the substrate protein, thus completing the reaction cycle. Several rounds of ATP-dependent interactions between DnaJ, DnaK and GrpE are required for fully efficient folding. The polypeptide is Protein GrpE (Mycobacterium tuberculosis (strain ATCC 25177 / H37Ra)).